Reading from the N-terminus, the 1399-residue chain is DNA-directed RNA polymerase subunit beta' (1399 aa).

Zn(2+) contacts are provided by Cys-70, Cys-72, Cys-85, and Cys-88. Residues Asp-460, Asp-462, and Asp-464 each contribute to the Mg(2+) site. Zn(2+)-binding residues include Cys-814, Cys-888, Cys-895, and Cys-898.

It belongs to the RNA polymerase beta' chain family. In terms of assembly, the RNAP catalytic core consists of 2 alpha, 1 beta, 1 beta' and 1 omega subunit. When a sigma factor is associated with the core the holoenzyme is formed, which can initiate transcription. The cofactor is Mg(2+). Zn(2+) serves as cofactor.

It catalyses the reaction RNA(n) + a ribonucleoside 5'-triphosphate = RNA(n+1) + diphosphate. Its function is as follows. DNA-dependent RNA polymerase catalyzes the transcription of DNA into RNA using the four ribonucleoside triphosphates as substrates. The sequence is that of DNA-directed RNA polymerase subunit beta' from Pseudomonas savastanoi pv. phaseolicola (strain 1448A / Race 6) (Pseudomonas syringae pv. phaseolicola (strain 1448A / Race 6)).